The sequence spans 136 residues: MSTKIQKTDAEWKALLAEKGAEPVAFEVTRHAATERPFTGKYEDNYAQGTYRCICCDAELFDSSSKFDAGCGWPSFSQELNKGAIEEHVDRAHGMTRTETVCANCGAHLGHVFPDGPTPTGLRYCMNSASLDFKPK.

The MsrB domain maps to 9–136 (DAEWKALLAE…NSASLDFKPK (128 aa)). Cys53, Cys56, Cys102, and Cys105 together coordinate Zn(2+). Cys125 functions as the Nucleophile in the catalytic mechanism.

The protein belongs to the MsrB Met sulfoxide reductase family. The cofactor is Zn(2+).

The enzyme catalyses L-methionyl-[protein] + [thioredoxin]-disulfide + H2O = L-methionyl-(R)-S-oxide-[protein] + [thioredoxin]-dithiol. This chain is Peptide methionine sulfoxide reductase MsrB, found in Polaromonas sp. (strain JS666 / ATCC BAA-500).